We begin with the raw amino-acid sequence, 348 residues long: Methylthioribose-1-phosphate isomerase (348 aa).

Substrate contacts are provided by residues 46-48 (RGA), Arg88, and Gln194. Residue Asp235 is the Proton donor of the active site. Residue 245–246 (NK) coordinates substrate.

Belongs to the eIF-2B alpha/beta/delta subunits family. MtnA subfamily.

It catalyses the reaction 5-(methylsulfanyl)-alpha-D-ribose 1-phosphate = 5-(methylsulfanyl)-D-ribulose 1-phosphate. The protein operates within amino-acid biosynthesis; L-methionine biosynthesis via salvage pathway; L-methionine from S-methyl-5-thio-alpha-D-ribose 1-phosphate: step 1/6. Functionally, catalyzes the interconversion of methylthioribose-1-phosphate (MTR-1-P) into methylthioribulose-1-phosphate (MTRu-1-P). The chain is Methylthioribose-1-phosphate isomerase from Desulforudis audaxviator (strain MP104C).